The chain runs to 61 residues: U-poneritoxin(01)-Om5a (61 aa).

Residues 1–23 (MKLSALSLAFAIILMMTIMYTKA) form the signal peptide. Positions 24-41 (DADASADAEADADAEAEA) are excised as a propeptide. Residue glutamine 59 is modified to Glutamine amide.

It belongs to the formicidae venom precursor-01 superfamily. Truncated sequences of this peptide have also been found in the venom. It is possible they have been cleaved in the venom. As to expression, expressed by the venom gland.

It localises to the secreted. Its function is as follows. Acidic peptide with potent hemolytic activities (94.8% at 50 uM). It also shows low antimicrobial activities against E.coli (MIC=50uM), as well as histamine-releasing activity (28.3% at 10 uM). Does not have activity against S.aureus, and S.cerevisiae. The chain is U-poneritoxin(01)-Om5a from Odontomachus monticola (Trap-jaw ant).